Consider the following 121-residue polypeptide: Large ribosomal subunit protein uL14 (121 aa).

The protein belongs to the universal ribosomal protein uL14 family. As to quaternary structure, part of the 50S ribosomal subunit. Forms a cluster with proteins L3 and L19. In the 70S ribosome, L14 and L19 interact and together make contacts with the 16S rRNA in bridges B5 and B8.

Binds to 23S rRNA. Forms part of two intersubunit bridges in the 70S ribosome. In Prochlorococcus marinus (strain MIT 9313), this protein is Large ribosomal subunit protein uL14.